Reading from the N-terminus, the 258-residue chain is Ribosomal protein L11 methyltransferase (258 aa).

Residues threonine 117, glycine 138, aspartate 160, and asparagine 201 each contribute to the S-adenosyl-L-methionine site.

It belongs to the methyltransferase superfamily. PrmA family.

Its subcellular location is the cytoplasm. The catalysed reaction is L-lysyl-[protein] + 3 S-adenosyl-L-methionine = N(6),N(6),N(6)-trimethyl-L-lysyl-[protein] + 3 S-adenosyl-L-homocysteine + 3 H(+). Methylates ribosomal protein L11. This chain is Ribosomal protein L11 methyltransferase, found in Thermosipho melanesiensis (strain DSM 12029 / CIP 104789 / BI429).